Here is a 122-residue protein sequence, read N- to C-terminus: NADH-quinone oxidoreductase subunit A (122 aa).

A run of 3 helical transmembrane segments spans residues 10–30 (LIIF…LTAG), 67–87 (FALL…WAVV), and 91–111 (LGLF…IGLI).

The protein belongs to the complex I subunit 3 family. As to quaternary structure, NDH-1 is composed of 14 different subunits. Subunits NuoA, H, J, K, L, M, N constitute the membrane sector of the complex.

Its subcellular location is the cell membrane. It catalyses the reaction a quinone + NADH + 5 H(+)(in) = a quinol + NAD(+) + 4 H(+)(out). Its function is as follows. NDH-1 shuttles electrons from NADH, via FMN and iron-sulfur (Fe-S) centers, to quinones in the respiratory chain. The immediate electron acceptor for the enzyme in this species is believed to be a menaquinone. Couples the redox reaction to proton translocation (for every two electrons transferred, four hydrogen ions are translocated across the cytoplasmic membrane), and thus conserves the redox energy in a proton gradient. The protein is NADH-quinone oxidoreductase subunit A of Geobacillus kaustophilus (strain HTA426).